The primary structure comprises 256 residues: E3 ubiquitin-protein ligase MIR2 (256 aa).

The Cytoplasmic segment spans residues 1-83; the sequence is MASKDVEEGV…NLWPEMERQE (83 aa). The RING-CH-type zinc-finger motif lies at 7–66; sequence EEGVEGPICWICREEVGNEGIHPCACTGELDVVHPQCLSTWLTVSRNTACQMCRVIYRTR. 8 residues coordinate Zn(2+): Cys15, Cys18, Cys30, Cys32, His40, Cys43, Cys56, and Cys59. Residues 84 to 104 traverse the membrane as a helical segment; that stretch reads IFELFLLMSVVVAGLVGVALC. The Extracellular portion of the chain corresponds to 105–124; it reads TWTLLVILTAPAGTFSPGAV. The helical transmembrane segment at 125–145 threads the bilayer; sequence LGFLCFFGFYQIFIVFAFGGI. Residues 146–256 are Cytoplasmic-facing; it reads CRVSGTVRAL…VRKNHPKNNG (111 aa). The segment at 179 to 256 is disordered; it reads DNIELTVLVG…VRKNHPKNNG (78 aa). Acidic residues predominate over residues 193-203; sequence TDEEPTDESSE. Over residues 245 to 256 the composition is skewed to basic residues; that stretch reads KPVRKNHPKNNG.

In terms of assembly, binds human MHC-I, CD86, ICAM1 and CD1D.

Its subcellular location is the host cell membrane. It localises to the host endoplasmic reticulum. The catalysed reaction is S-ubiquitinyl-[E2 ubiquitin-conjugating enzyme]-L-cysteine + [acceptor protein]-L-lysine = [E2 ubiquitin-conjugating enzyme]-L-cysteine + N(6)-ubiquitinyl-[acceptor protein]-L-lysine.. It participates in protein modification; protein ubiquitination. In terms of biological role, membrane-bound E3 ubiquitin ligase expressed at the immediate early stage of viral reactivation to mediate polyubiquitination of various host membrane proteins related to the immune response. Promotes ubiquitination and subsequent degradation of host MHC-I, CD86, DC-SIGN and DC-SIGNR, ICAM1 and CD1D molecules, presumably to prevent lysis of infected cells by cytotoxic T-lymphocytes and NK cell. Plays a role in the down-regulation of the host stress-induced NKG2D ligands MICA, MICB and CLEC2B, which enable immune cells expressing the NKG2D receptor to recognize and annihilate infected cells prior to viral spread. Alters monocyte metabolism and proliferation by mediating rapid internalization of cellular growth factor-binding receptor tyrosine kinases from the surface leading to increased signaling. The chain is E3 ubiquitin-protein ligase MIR2 (K5) from Homo sapiens (Human).